The primary structure comprises 267 residues: Tetrahydromethanopterin S-methyltransferase subunit C (267 aa).

Helical transmembrane passes span 19–39, 40–60, 75–95, 96–116, 131–151, 162–182, and 221–241; these read IMAI…FMPA, QFSF…ADAV, IGMI…SVGG, IAGP…IGVL, AMVE…VVIA, YVVA…GILH, and GLMA…WAFM.

This sequence belongs to the MtrC family. In terms of assembly, the complex is composed of 8 subunits; MtrA, MtrB, MtrC, MtrD, MtrE, MtrF, MtrG and MtrH.

The protein localises to the cell membrane. It carries out the reaction 5-methyl-5,6,7,8-tetrahydromethanopterin + coenzyme M + 2 Na(+)(in) = 5,6,7,8-tetrahydromethanopterin + methyl-coenzyme M + 2 Na(+)(out). It functions in the pathway one-carbon metabolism; methanogenesis from CO(2); methyl-coenzyme M from 5,10-methylene-5,6,7,8-tetrahydromethanopterin: step 2/2. Part of a complex that catalyzes the formation of methyl-coenzyme M and tetrahydromethanopterin from coenzyme M and methyl-tetrahydromethanopterin. This is an energy-conserving, sodium-ion translocating step. The chain is Tetrahydromethanopterin S-methyltransferase subunit C from Methanosarcina acetivorans (strain ATCC 35395 / DSM 2834 / JCM 12185 / C2A).